The sequence spans 32 residues: Beta-amanitin proprotein (32 aa).

Positions 1 to 10 (MSDINATRLP) are excised as a propeptide. Residues 11 to 18 (IWGIGCDP) constitute a cross-link (cyclopeptide (Ile-Pro)). Positions 12-16 (WGIGC) form a cross-link, 2'-cysteinyl-6'-hydroxytryptophan sulfoxide (Trp-Cys). Positions 19 to 32 (CIGDDVTILLTRGE) are excised as a propeptide.

The protein belongs to the MSDIN fungal toxin family. Post-translationally, processed by the macrocyclase-peptidase enzyme POPB to yield a toxic cyclic decapeptide. POPB first removes 10 residues from the N-terminus. Conformational trapping of the remaining peptide forces the enzyme to release this intermediate rather than proceed to macrocyclization. The enzyme rebinds the remaining peptide in a different conformation and catalyzes macrocyclization of the N-terminal 8 residues.

Toxin belonging to the bicyclic octapeptides amatoxins that acts by binding non-competitively to RNA polymerase II and greatly slowing the elongation of transcripts from target promoters. This Amanita phalloides (Death cap) protein is Beta-amanitin proprotein.